A 383-amino-acid polypeptide reads, in one-letter code: MTIETTTKKRPRAARPPRPRESDAYLETVAGLLDVRDKTGYIRTHGYLPGVDDVRVPHAQIRQYGLRPGDHVVATTRKPYERLAEVESVNGSTDWRNRPDFADMTPIHPRERLRLETESVTSRVIDLFAPIGKGQRGLIVAPPKAGKTMVLQDLAAAITRNHPDCHLMVVLVGERPEEVTEMRESIHGEVAASTFDRPDRDHTALAELAVERAKRLAESGHDVVVLLDSLTRLGRAYNNLAPGGGRTLAGGLDAAALLPPRRFFGAARNLRDGGSLTILATALVETGSRMDDNLFEEFKGTGNMELRLSRALADKRLYPAVDLDASGTRREEILLDPQEHQLTWRLRRTLGGLEKQQALELLTDRLRETPSNAAFLQQVRQTT.

The interval 1–22 is disordered; sequence MTIETTTKKRPRAARPPRPRES. Positions 8-17 are enriched in basic residues; it reads KKRPRAARPP. Residues 26 to 93 enclose the Rho RNA-BD domain; the sequence is LETVAGLLDV…AEVESVNGST (68 aa). ATP is bound by residues 132–137, 144–149, and Arg175; these read GKGQRG and KAGKTM.

This sequence belongs to the Rho family. As to quaternary structure, homohexamer. The homohexamer assembles into an open ring structure.

Functionally, facilitates transcription termination by a mechanism that involves Rho binding to the nascent RNA, activation of Rho's RNA-dependent ATPase activity, and release of the mRNA from the DNA template. In Streptosporangium roseum (strain ATCC 12428 / DSM 43021 / JCM 3005 / KCTC 9067 / NCIMB 10171 / NRRL 2505 / NI 9100), this protein is Transcription termination factor Rho.